The following is a 456-amino-acid chain: Glutamate-gated chloride channel (456 aa).

Residues 1 to 22 form the signal peptide; that stretch reads MGSGHYFWAILYFASLCSASLA. Topologically, residues 23–245 are extracellular; sequence NNAKINFREK…VDLLFKREFS (223 aa). Residues Arg71, Arg90, and Ser154 each coordinate L-glutamate. Cys163 and Cys177 form a disulfide bridge. Ser183 is an L-glutamate binding site. Residues Cys222 and Cys233 are joined by a disulfide bond. Residues 246–268 form a helical membrane-spanning segment; the sequence is YYLIQIYIPCCMLVIVSWVSFWL. The Cytoplasmic segment spans residues 269 to 273; it reads DQGAV. The helical transmembrane segment at 274 to 295 threads the bilayer; the sequence is PARVSLGVTTLLTMATQTSGIN. Residues 296–302 are Extracellular-facing; the sequence is ASLPPVS. The helical transmembrane segment at 303–323 threads the bilayer; it reads YTKAIDVWTGVCLTFVFGALL. Residues 324–426 are Cytoplasmic-facing; it reads EFALVNYASR…RQCSRSKRID (103 aa). A helical transmembrane segment spans residues 427-450; sequence VISRITFPLVFALFNLVYWSTYLF. At 451–456 the chain is on the extracellular side; sequence REEEDE.

Belongs to the ligand-gated ion channel (TC 1.A.9) family. Glutamate-gated chloride channel (TC 1.A.9.4) subfamily. In terms of assembly, pentamer. Homomultimer. In terms of tissue distribution, expressed in the medulla layers (at protein level). Expressed in all major ON pathway medulla neurons (Mi1, Tm3, Mi4, and Mi9) and in OFF pathway neurons (Tm1, Tm2, Tm4, and Tm9).

Its subcellular location is the postsynaptic cell membrane. It is found in the cell membrane. Glutamate binding triggers a rapidly reversible current, while the anti-helmintic drug ivermectin triggers a permanently open channel configuration. Inhibited by picrotoxin. Glutamate-gated chloride channel subunit. Together with Gamma-aminobutyric acid receptor Rdl, plays an important role in the visual response by regulating the activity of ON/OFF-selective neurons. This chain is Glutamate-gated chloride channel (GluClalpha), found in Drosophila melanogaster (Fruit fly).